Here is a 320-residue protein sequence, read N- to C-terminus: Mitochondrial oxaloacetate transport protein (320 aa).

Solcar repeat units lie at residues leucine 21–threonine 114, asparagine 126–methionine 218, and glutamate 227–leucine 313. 6 helical membrane-spanning segments follow: residues glycine 26–isoleucine 47, glycine 91–isoleucine 111, alanine 129–phenylalanine 145, alanine 197–arginine 217, leucine 233–valine 253, and leucine 285–phenylalanine 306.

It belongs to the mitochondrial carrier (TC 2.A.29) family.

The protein localises to the mitochondrion inner membrane. The catalysed reaction is a dicarboxylate(in) + sulfate(out) = a dicarboxylate(out) + sulfate(in). It catalyses the reaction (2S)-2-isopropylmalate(in) + sulfate(out) = (2S)-2-isopropylmalate(out) + sulfate(in). It carries out the reaction (2R,3S)-3-isopropylmalate(in) + sulfate(out) = (2R,3S)-3-isopropylmalate(out) + sulfate(in). The enzyme catalyses malonate(in) + sulfate(out) = malonate(out) + sulfate(in). The catalysed reaction is oxaloacetate(in) + sulfate(out) = oxaloacetate(out) + sulfate(in). It catalyses the reaction thiosulfate(in) + sulfate(out) = thiosulfate(out) + sulfate(in). In terms of biological role, antiporter that exchanges dicarboxylates and sulfur oxoanions across the inner membrane of mitochondria. Exports alpha-isopropylmalate from mitochondrial matrix to the cytosol, where it serves as a precursor for leucine biosynthesis. The protein is Mitochondrial oxaloacetate transport protein (oac1) of Schizosaccharomyces pombe (strain 972 / ATCC 24843) (Fission yeast).